The following is a 295-amino-acid chain: MYTALLQSMNRLHPRAWDFIQLVRLDRPIGIYLLLWPTLWAVWIAADGSPSLKHVLIFTCGVILMRSAGCVINDFADRNFDGHVARTRQRPLATGRIRTREAWALFAVLVALSFGLVLLTDPFTVALSFGALAVASLYPFMKRYTHLPQLVLGAAYSWGIPMAFTAATGRLPLEAWLIFAANLAWTVAYDTYYAMTDREDDLKIGVKSTAILFGAADRAIILALQGLTLGLLLVVGMRLGLGPYFHLGLLVAALCFAWEFVTTRRREPQACFRAFLHNHWAGLAILVGLILDYGI.

Helical transmembrane passes span 28-48 (PIGI…AADG), 55-75 (VLIF…INDF), 103-123 (WALF…TDPF), 147-167 (LPQL…FTAA), 175-195 (AWLI…YYAM), 219-239 (AIIL…GMRL), 241-261 (LGPY…WEFV), and 275-295 (FLHN…DYGI).

It belongs to the UbiA prenyltransferase family. Mg(2+) is required as a cofactor.

Its subcellular location is the cell inner membrane. It catalyses the reaction all-trans-octaprenyl diphosphate + 4-hydroxybenzoate = 4-hydroxy-3-(all-trans-octaprenyl)benzoate + diphosphate. It participates in cofactor biosynthesis; ubiquinone biosynthesis. Functionally, catalyzes the prenylation of para-hydroxybenzoate (PHB) with an all-trans polyprenyl group. Mediates the second step in the final reaction sequence of ubiquinone-8 (UQ-8) biosynthesis, which is the condensation of the polyisoprenoid side chain with PHB, generating the first membrane-bound Q intermediate 3-octaprenyl-4-hydroxybenzoate. This chain is 4-hydroxybenzoate octaprenyltransferase, found in Azotobacter vinelandii (strain DJ / ATCC BAA-1303).